The following is a 208-amino-acid chain: Large ribosomal subunit protein bL25 (208 aa).

The interval 184 to 208 is disordered; sequence VTISGTSSDQDTSGGESSGTTTSED. The span at 187-208 shows a compositional bias: low complexity; sequence SGTSSDQDTSGGESSGTTTSED.

Belongs to the bacterial ribosomal protein bL25 family. CTC subfamily. Part of the 50S ribosomal subunit; part of the 5S rRNA/L5/L18/L25 subcomplex. Contacts the 5S rRNA. Binds to the 5S rRNA independently of L5 and L18.

Functionally, this is one of the proteins that binds to the 5S RNA in the ribosome where it forms part of the central protuberance. In Ehrlichia ruminantium (strain Gardel), this protein is Large ribosomal subunit protein bL25.